A 157-amino-acid polypeptide reads, in one-letter code: SsrA-binding protein (157 aa).

A disordered region spans residues 131–157; that stretch reads KQLHDKRDTEKKRDWSREKGRIMRARG. A compositionally biased stretch (basic and acidic residues) spans 132 to 151; sequence QLHDKRDTEKKRDWSREKGR.

This sequence belongs to the SmpB family.

Its subcellular location is the cytoplasm. Its function is as follows. Required for rescue of stalled ribosomes mediated by trans-translation. Binds to transfer-messenger RNA (tmRNA), required for stable association of tmRNA with ribosomes. tmRNA and SmpB together mimic tRNA shape, replacing the anticodon stem-loop with SmpB. tmRNA is encoded by the ssrA gene; the 2 termini fold to resemble tRNA(Ala) and it encodes a 'tag peptide', a short internal open reading frame. During trans-translation Ala-aminoacylated tmRNA acts like a tRNA, entering the A-site of stalled ribosomes, displacing the stalled mRNA. The ribosome then switches to translate the ORF on the tmRNA; the nascent peptide is terminated with the 'tag peptide' encoded by the tmRNA and targeted for degradation. The ribosome is freed to recommence translation, which seems to be the essential function of trans-translation. The polypeptide is SsrA-binding protein (Rhodopseudomonas palustris (strain BisB18)).